Here is a 1103-residue protein sequence, read N- to C-terminus: MSENVYPKANEGGETAHVAPNPSFPDMEETVLDYWDKDDTFQKSVERNPSGDHSQNEFVFFDGPPFANGLPHYGHLLTGYAKDVIPRYQTMKGRKVNRVFGWDTHGLPAELEAQKELGIDSVDQIEKMGIDKFNDACRASVLKYTNEWQNYVHRQARWVDFEHGYKTLNIPYMESVMWAFKQLYDKGLAYQGYRVLPYCPKDRTPLSAHELRMDADVYQDRQDTTVSVAVKMRDEDDAYAVFWTTTPWTVPTNFAIVVGGDIDYVEVRPTEGKFAGKKFYLGKDLLPHYEKELGENYEVVRELKGSELEGRRYYPVFPYFAGDEAESEGHVPGPNGYTIFTADYVDTVEGTGLVHQAPYGEDDMNTLNAKGIKSTDVLDDGCRFTAQCPDYEGDFVFDANLPILRNLRAGDGPLAEIPEERRAILFQEKSYVHSYPHCWRCATPLIYKPVSSWFVSVTKIKPRLLELNQQINWIPGNVKDGQFGKWLANARDWSISRNRFWGSPIPVWVSDDPKYPRVDVYGSLEELKADFGDYPRDKDGNINMHRPWIDNLVRVNPDDPTGKSHMHRISDVLDCWFESGSMSFAQFHYPFENKEKFEQHFPADYIVEYIGQTRGWFYLLHVMATALFDRPAFKNVICHGIVLGSDGQKMSKHLRNYPDVNGVFDKYGSDAMRWFLMSSPILRGGNLIVTADGIRDTVRQVMLPVWSSYYFFTLYANAANGGAGFDARQLRADEVAGLPEMDRYLLARTRRLVLAAEKSLNEFAISDACDAVSDFIDVLTNWYIRNTRDRFWNEDASAFNTLYTVLEAFMRVLAPLAPMEAESVWRGLTGGESVHLAEWPFVVDEKTGADTELGRVLVDDPALVDAMEKVREVVSGTLSLRKAAKIRVRQPLSKLTVVAGNVEAVKAYDDLLKAELNIKNIEFSTLQDAAAHGLKIVHELRVNARAAGPRLGKQVQFAIKASKSGDWHVDAASGAPVVSTPSGDLALVEGEYELINRVEEENATEAAASVSAALPTGGFVILDTALDADLLAEGYARDVIRSVQDARKAADLDIADRISLVLTVPAVDVAKVEQFRDLIAHETLATSFEVKEGAELGVEVVKA.

The tract at residues Met1–Pro25 is disordered. Residues Pro65–His75 carry the 'HIGH' region motif. The 'KMSKS' region signature appears at Lys649–His653. Position 652 (Lys652) interacts with ATP.

This sequence belongs to the class-I aminoacyl-tRNA synthetase family. IleS type 2 subfamily. In terms of assembly, monomer. Requires Zn(2+) as cofactor.

It is found in the cytoplasm. It catalyses the reaction tRNA(Ile) + L-isoleucine + ATP = L-isoleucyl-tRNA(Ile) + AMP + diphosphate. Functionally, catalyzes the attachment of isoleucine to tRNA(Ile). As IleRS can inadvertently accommodate and process structurally similar amino acids such as valine, to avoid such errors it has two additional distinct tRNA(Ile)-dependent editing activities. One activity is designated as 'pretransfer' editing and involves the hydrolysis of activated Val-AMP. The other activity is designated 'posttransfer' editing and involves deacylation of mischarged Val-tRNA(Ile). This chain is Isoleucine--tRNA ligase, found in Bifidobacterium longum (strain NCC 2705).